Here is an 803-residue protein sequence, read N- to C-terminus: MTFNHKKMEPKWQQYWSEHNTFKTTEDKNKENFYALDMFPYPSGAGLHVGHPEGYTATDILSRMKRMQGKNVLHPIGWDAFGLPAEQYAIDTGNDPEEFTALNIANFTRQIKSLGFSYDWDREINTTDPEYYKWTQWIFEKLYENGLAYEAEIAVNWCPALGTVLANEEVIDGKSERGGFPVFRKPMRQWMLKITAYADRLLDDLDLVDWPENIKDMQRNWIGRSEGAEVTFKIKDSDETFNVFTTRPDTLFGATYTVFAPEHELIEKITTPEQKEAVEAYKKQVELKSELERTDLAKDKTGVFTGAYAINPINGEEVPIWIADYVLIQYGTGAIMAVPAHDERDFEFAQQFGLNIRPVLEGGDVTKEAFTGDGPHINSDFLNGLAKAEAITAAIDWLEKEGIGSRKITYRLRDWLFSRQRYWGEPIPVIHWEDGETTLVPEDELPLLLPKATEIKPSGTGESPLANLHDWVNVTDENGRKGRRETNTMPQWAGSSWYFLRYIDPKNSEAIADKEKLAEWLPVDVYIGGAEHAVLHLLYARFWHKFLYDIGVVPTKEPFQKLFNQGMILGENNEKMSKSRGNVVNPDEVVEKYGADTLRLYEMFMGPLEASIAWNENGLEGARKFLDRIWRLLVTEEGTLAEKVTTDANANLEKAYHHMVKTVTNHYENLRFNTGISQLMIFINEAYKQDTIPKQYVEGFVQLLSPIAPHLAEELWEILGHTETISYVAWPTYDETKLVEDEVEIVLQVNGKVKSKITVAKSLGKEELEKIAQEDNKMKENLEGKTIRKVIVVPGKLVNIVAN.

The short motif at 40–51 (PYPSGAGLHVGH) is the 'HIGH' region element. Positions 575-579 (KMSKS) match the 'KMSKS' region motif. Lys578 provides a ligand contact to ATP.

The protein belongs to the class-I aminoacyl-tRNA synthetase family.

Its subcellular location is the cytoplasm. The enzyme catalyses tRNA(Leu) + L-leucine + ATP = L-leucyl-tRNA(Leu) + AMP + diphosphate. This is Leucine--tRNA ligase from Listeria monocytogenes serotype 4a (strain HCC23).